A 473-amino-acid polypeptide reads, in one-letter code: Fumarate hydratase class II (473 aa).

Residues 105 to 107 (SGT), 130 to 133 (HPND), 140 to 142 (SSN), and Thr188 each bind substrate. His189 (proton donor/acceptor) is an active-site residue. Residue Ser319 is part of the active site. Substrate-binding positions include Ser320 and 325-327 (KVN).

It belongs to the class-II fumarase/aspartase family. Fumarase subfamily. Homotetramer.

It is found in the cytoplasm. It carries out the reaction (S)-malate = fumarate + H2O. It participates in carbohydrate metabolism; tricarboxylic acid cycle; (S)-malate from fumarate: step 1/1. Functionally, involved in the TCA cycle. Catalyzes the stereospecific interconversion of fumarate to L-malate. This Xylella fastidiosa (strain 9a5c) protein is Fumarate hydratase class II.